A 225-amino-acid chain; its full sequence is MAIRDWPEGEGPREKLLQRGAAHLSDAELLAVLLRNGVSGQNAVDLARELIGEFGGLRPLFSATKQQVCRLQGLGPVKYAQLQASAELARRLAGESLQRGAVLTSPDLTRDYLRFQLADRAYEVFAVLLLDSQHRVIQFVELFRGTIDAASVYPRELVSLVLEKRAAAVIVCHNHPSGVAEPSQADRRITERLKNALATIDVSLLDHMVVGDREIVSFAERGWIG.

Positions 102–224 constitute an MPN domain; that stretch reads VLTSPDLTRD…IVSFAERGWI (123 aa). 3 residues coordinate Zn(2+): histidine 173, histidine 175, and aspartate 186. The short motif at 173–186 is the JAMM motif element; it reads HNHPSGVAEPSQAD.

It belongs to the UPF0758 family.

The chain is UPF0758 protein Sama_0327 from Shewanella amazonensis (strain ATCC BAA-1098 / SB2B).